Reading from the N-terminus, the 232-residue chain is Sec-independent protein translocase protein TatB (232 aa).

Residues 1 to 21 (MFDIGFGELMLLFVIGLVVLG) form a helical membrane-spanning segment. Disordered regions lie at residues 108–129 (EPHT…GVTP) and 176–232 (AAST…NNDR). 2 stretches are compositionally biased toward low complexity: residues 189-203 (ADSA…ATPA) and 214-232 (RAAT…NNDR).

This sequence belongs to the TatB family. As to quaternary structure, the Tat system comprises two distinct complexes: a TatABC complex, containing multiple copies of TatA, TatB and TatC subunits, and a separate TatA complex, containing only TatA subunits. Substrates initially bind to the TatABC complex, which probably triggers association of the separate TatA complex to form the active translocon.

The protein resides in the cell inner membrane. In terms of biological role, part of the twin-arginine translocation (Tat) system that transports large folded proteins containing a characteristic twin-arginine motif in their signal peptide across membranes. Together with TatC, TatB is part of a receptor directly interacting with Tat signal peptides. TatB may form an oligomeric binding site that transiently accommodates folded Tat precursor proteins before their translocation. The protein is Sec-independent protein translocase protein TatB of Sodalis glossinidius (strain morsitans).